A 634-amino-acid chain; its full sequence is Poly(ribitol-phosphate) beta-glucosyltransferase (634 aa).

This sequence belongs to the glycosyltransferase 2 family.

It catalyses the reaction 4-O-[(D-ribitylphospho)(n)-D-ribitylphospho-(2R)-glycerylphospho]-N-acetyl-beta-D-mannosaminyl-(1-&gt;4)-N-acetyl-alpha-D-glucosaminyl di-trans,octa-cis-undecaprenyl diphosphate + n UDP-alpha-D-glucose = 4-O-[(2-beta-D-glucosyl-D-ribitylphospho)(n)-D-ribitylphospho-(2R)-glycerylphospho]-N-acetyl-beta-D-mannosaminyl-(1-&gt;4)-N-acetyl-alpha-D-glucosaminyl di-trans,octa-cis-undecaprenyl diphosphate + n UDP + n H(+). The protein operates within cell wall biogenesis; poly(ribitol phosphate) teichoic acid biosynthesis. Functionally, attaches glucose residues to poly(RboP)-wall teichoic acids (WTAs). This Bacillus spizizenii (strain ATCC 23059 / NRRL B-14472 / W23) (Bacillus subtilis subsp. spizizenii) protein is Poly(ribitol-phosphate) beta-glucosyltransferase.